Consider the following 246-residue polypeptide: Ureidoacrylate amidohydrolase RutB (246 aa).

Residues Met-1–Pro-27 are disordered. Asp-41 serves as the catalytic Proton acceptor. Lys-150 is a catalytic residue. The active-site Nucleophile is the Cys-183.

The protein belongs to the isochorismatase family. RutB subfamily.

The enzyme catalyses (Z)-3-ureidoacrylate + H2O + H(+) = (Z)-3-aminoacrylate + NH4(+) + CO2. It catalyses the reaction (Z)-3-ureidoacrylate + H2O = (Z)-3-aminoacrylate + carbamate + H(+). The catalysed reaction is (Z)-2-methylureidoacrylate + H2O + H(+) = (Z)-2-methylaminoacrylate + NH4(+) + CO2. Hydrolyzes ureidoacrylate to form aminoacrylate and carbamate. The carbamate hydrolyzes spontaneously, thereby releasing one of the nitrogen atoms of the pyrimidine ring as ammonia and one of its carbon atoms as CO2. This is Ureidoacrylate amidohydrolase RutB from Rhizobium rhizogenes (strain K84 / ATCC BAA-868) (Agrobacterium radiobacter).